Here is a 380-residue protein sequence, read N- to C-terminus: O-methyltransferase ucdC (380 aa).

Residues 222–223 (GG), Asp-247, and Arg-283 contribute to the S-adenosyl-L-methionine site. His-287 acts as the Proton acceptor in catalysis.

Belongs to the class I-like SAM-binding methyltransferase superfamily. Cation-independent O-methyltransferase family. COMT subfamily.

It functions in the pathway secondary metabolite biosynthesis. Functionally, nonribosomal peptide synthetase that mediates the biosynthesis of usterphenyllins and uscandidusins, p-terphenyl derivatives. Within the pathway, ucdC catalyzes O-methylation of the terphenyl triol intermediate produced by ucdB to yield terphenyllin carrying two methoxy moieties at C-9 and C-12. The pathway begin with the biosynthesis of 4-hydroxyphenylpyruvate (HPPA) from L-tyrosine, possibly by the aminotransferase ucdG. The nonribosomal peptide synthetase ucdA then condenses two HPPA units to produce atromentin. The key step in this pathway is the reduction and dehydration of atromentin to form a terphenyl triol intermediate, performed by the NAD-dependent dehydrogenase ucdB. Further O-methylation by the methyltransferase ucdC forms terphenyllin carrying two methoxy moieties at C-9 and C-12, and subsequent dihydroxylation at C-3 of ring A and C-15 of ring C by the flavin-dependent oxygenase ucdD leads to 3,15-dihydroxyterphenyllin. Prenylation by ucdE at position C-5 of ring A forms usterphenyllin B, and is followed by a second prenylation at position C-14 of ring C to form usterphenyllin A. The following furan ring formation that leads to uscandidusins A and B was proven to be an unexpected spontaneous non-enzymatic reaction. This is O-methyltransferase ucdC from Aspergillus ustus.